We begin with the raw amino-acid sequence, 118 residues long: Hisactophilin-2 (118 aa).

Glycine 2 carries N-myristoyl glycine lipidation. Residues 8-109 form a contains several HHXH repeats region; that stretch reads AHNGHYLSAE…HVSTSHHHDH (102 aa). Tandem repeats lie at residues 34-46 and 74-86. The interval 34-86 is 2 X 13 AA approximate repeats; the sequence is FHIENHGSKVALRTHCGKYVSIGDHKQVYLSHHLHGDHSLFHLEHHHGKVSIK. The segment at 99–118 is disordered; that stretch reads GHVSTSHHHDHHATFEEHIL.

The protein belongs to the hisactophilin family. As to quaternary structure, homodimer or heterodimer of hatA and hatB, linked by a disulfide bond. Phosphorylated.

It is found in the cytoplasm. It localises to the cell membrane. Its function is as follows. May act as an intracellular pH sensor that links chemotactic signals to responses in the microfilament system of the cells by nucleating actin polymerization or stabilizing the filaments. The protein is Hisactophilin-2 (hatB) of Dictyostelium discoideum (Social amoeba).